Here is a 358-residue protein sequence, read N- to C-terminus: Trace amine-associated receptor 7a (358 aa).

The Extracellular portion of the chain corresponds to 1 to 47 (MDKLVDNFLSGQSRTMSEDLLSASSPQLCYENLNGSCIRSPYSPGPR). N-linked (GlcNAc...) asparagine glycosylation occurs at N34. 2 disulfides stabilise this stretch: C37/C201 and C120/C205. Residues 48–68 (LILYAVFGFGAVLAVCGNLLV) traverse the membrane as a helical segment. Over 69-83 (MTSILHFRQLHSPAN) the chain is Cytoplasmic. Residues 84-104 (FLVASLACADFLVGLTVMPFS) traverse the membrane as a helical segment. Residues 105-121 (TVRSVEGCWYFGDTYCK) lie on the Extracellular side of the membrane. The helical transmembrane segment at 122 to 143 (FHSCFEGSFCYSSIFHLCFISV) threads the bilayer. Over 144–166 (DRYIAVSDPLIYPTRFTASVSGK) the chain is Cytoplasmic. The helical transmembrane segment at 167-187 (CITFSWLLSIIYSFSLLYTGA) threads the bilayer. The Extracellular portion of the chain corresponds to 188-212 (NEAGLEDLVSALTCVGGCQIAVNQS). An N-linked (GlcNAc...) asparagine glycan is attached at N210. The helical transmembrane segment at 213-233 (WVFINFLLFLVPTLVMMTVYS) threads the bilayer. The Cytoplasmic portion of the chain corresponds to 234–274 (KIFLIAKQQAQNIEKMSKQTTRASESYKDRVAKRERKAAKT). A helical membrane pass occupies residues 275-295 (LGIAVAAFLLSWLPYFIDSII). The Extracellular portion of the chain corresponds to 296 to 309 (DAFLGFITPTYVYE). Residues 310–333 (ILVWIAYYNSAMNPLIYAFFYPWF) form a helical membrane-spanning segment. At 334 to 358 (RKAIKLIVTGKILRQNSSVTNLFPE) the chain is on the cytoplasmic side.

It belongs to the G-protein coupled receptor 1 family.

Its subcellular location is the cell membrane. In terms of biological role, olfactory receptor specific for N,N-dimethylalkylamines trace amines. Trace amine compounds are enriched in animal body fluids and act on trace amine-associated receptors (TAARs) to elicit both intraspecific and interspecific innate behaviors. Ligand-binding causes a conformation change that triggers signaling via G(s)-class of G alpha proteins (GNAL or GNAS). This chain is Trace amine-associated receptor 7a, found in Rattus norvegicus (Rat).